The chain runs to 22 residues: Caerin-3.3 (22 aa).

Lysine amide is present on Lys-22.

Expressed by the skin parotoid and/or rostral glands.

Its subcellular location is the secreted. Functionally, antibacterial peptide, that adopts an alpha helical conformation which can disrupt bacterial membranes. Each caerin displays a different antimicrobial specificity. This Ranoidea caerulea (Green tree frog) protein is Caerin-3.3.